Reading from the N-terminus, the 204-residue chain is Protein XpaC (204 aa).

In double copy it causes aberrant cell morphology, filamentation and inhibits sporulation. Hydrolyzes 5-bromo-4-chloroindolyl phosphate. The sequence is that of Protein XpaC (xpaC) from Bacillus subtilis (strain 168).